The primary structure comprises 417 residues: MLEQMGQAAKAASYQMALLSSREKNRVLEKIADYLEANAEEILLANEQDLLEARRSGLSEALLDRLALNPQRLHAIANDVRQVCQLADPVGQVIDGGLLESGLRIERRRVPLGVVGVIYEARPNVTVDVASLCLKTGNAAILRGGKETWRTNAATVKVIQKALEECGLPAAAVQAIESPDRALVSEMLRMDKYIDMLIPRGGAGLHKLCREQSTIPVITGGIGVCHIFVDETAEFAPALNIITNAKTQRPSTCNTVETLLVHEAIAERFLPELSRAMHERGVTLHADARALALLSGGPATAVAVKPEAFDDEWLSLDLNVKLVAGIDEAIAHIREHGTQHSDAILTRTLRHADRFVNEVDSSAVYVNASTRFTDGGQFGLGAEVAVSTQKLHARGPMGLEALTTYKWIGYGDDTIRA.

This sequence belongs to the gamma-glutamyl phosphate reductase family.

It is found in the cytoplasm. The catalysed reaction is L-glutamate 5-semialdehyde + phosphate + NADP(+) = L-glutamyl 5-phosphate + NADPH + H(+). The protein operates within amino-acid biosynthesis; L-proline biosynthesis; L-glutamate 5-semialdehyde from L-glutamate: step 2/2. Functionally, catalyzes the NADPH-dependent reduction of L-glutamate 5-phosphate into L-glutamate 5-semialdehyde and phosphate. The product spontaneously undergoes cyclization to form 1-pyrroline-5-carboxylate. In Cronobacter sakazakii (strain ATCC BAA-894) (Enterobacter sakazakii), this protein is Gamma-glutamyl phosphate reductase.